We begin with the raw amino-acid sequence, 183 residues long: Large ribosomal subunit protein bL27m (183 aa).

The N-terminal 34 residues, 1 to 34 (MFLRPTSIPSAVSQIRAQLFAGPSSLASQIQVRW), are a transit peptide targeting the mitochondrion.

It belongs to the bacterial ribosomal protein bL27 family.

It localises to the mitochondrion. This chain is Large ribosomal subunit protein bL27m (RPL27), found in Cryptococcus neoformans var. neoformans serotype D (strain B-3501A) (Filobasidiella neoformans).